A 544-amino-acid chain; its full sequence is Aspartokinase 2, chloroplastic (544 aa).

The N-terminal 84 residues, 1-84, are a transit peptide targeting the chloroplast; that stretch reads MASLQLYGVK…SSGTGKELTC (84 aa). 3 residues coordinate ATP: Lys87, Gly90, and Ser119. Glu203 provides a ligand contact to substrate. 2 consecutive ACT domains span residues 401–479 and 481–544; these read IAST…RRSI and SLIG…ETDP.

It belongs to the aspartokinase family. As to expression, expressed in stems, leaves, floral organs and young seedlings.

It localises to the plastid. Its subcellular location is the chloroplast. It catalyses the reaction L-aspartate + ATP = 4-phospho-L-aspartate + ADP. The protein operates within amino-acid biosynthesis; L-lysine biosynthesis via DAP pathway; (S)-tetrahydrodipicolinate from L-aspartate: step 1/4. Its pathway is amino-acid biosynthesis; L-methionine biosynthesis via de novo pathway; L-homoserine from L-aspartate: step 1/3. It participates in amino-acid biosynthesis; L-threonine biosynthesis; L-threonine from L-aspartate: step 1/5. With respect to regulation, allosterically inhibited by lysine, but not by S-adenosyl-L-methionine (SAM). K(0.5) for lysine in the presence of physiological concentrations of substrates is 12.5 uM. No inhibition by threonine or leucine and no activation or inhibition by alanine, cysteine, isoleucine, serine, valine, methionine, glutamine, asparagine, glutamic acid or arginine. Its function is as follows. Involved in the first step of essential amino acids lysine, threonine, methionine and isoleucine synthesis via the aspartate-family pathway. The chain is Aspartokinase 2, chloroplastic (AK2) from Arabidopsis thaliana (Mouse-ear cress).